An 82-amino-acid chain; its full sequence is Cytochrome b559 subunit alpha (82 aa).

Residues 22–36 (VIHFVTLPSIFLAGF) traverse the membrane as a helical segment. His24 serves as a coordination point for heme.

It belongs to the PsbE/PsbF family. In terms of assembly, heterodimer of an alpha subunit and a beta subunit. PSII is composed of 1 copy each of membrane proteins PsbA, PsbB, PsbC, PsbD, PsbE, PsbF, PsbH, PsbI, PsbJ, PsbK, PsbL, PsbM, PsbT, PsbX, PsbY, PsbZ, Psb30/Ycf12, peripheral proteins PsbO, CyanoQ (PsbQ), PsbU, PsbV and a large number of cofactors. It forms dimeric complexes. The cofactor is heme b.

It is found in the cellular thylakoid membrane. This b-type cytochrome is tightly associated with the reaction center of photosystem II (PSII). PSII is a light-driven water:plastoquinone oxidoreductase that uses light energy to abstract electrons from H(2)O, generating O(2) and a proton gradient subsequently used for ATP formation. It consists of a core antenna complex that captures photons, and an electron transfer chain that converts photonic excitation into a charge separation. The polypeptide is Cytochrome b559 subunit alpha (Parasynechococcus marenigrum (strain WH8102)).